A 259-amino-acid polypeptide reads, in one-letter code: 7-cyano-7-deazaguanine synthase (259 aa).

Position 32-42 (32-42) interacts with ATP; sequence LSGGLDSVTCL. Residues cysteine 223, cysteine 233, cysteine 236, and cysteine 239 each coordinate Zn(2+).

This sequence belongs to the QueC family. Requires Zn(2+) as cofactor.

The catalysed reaction is 7-carboxy-7-deazaguanine + NH4(+) + ATP = 7-cyano-7-deazaguanine + ADP + phosphate + H2O + H(+). It functions in the pathway purine metabolism; 7-cyano-7-deazaguanine biosynthesis. Its function is as follows. Catalyzes the ATP-dependent conversion of 7-carboxy-7-deazaguanine (CDG) to 7-cyano-7-deazaguanine (preQ(0)). The polypeptide is 7-cyano-7-deazaguanine synthase (Psychrobacter cryohalolentis (strain ATCC BAA-1226 / DSM 17306 / VKM B-2378 / K5)).